The primary structure comprises 181 residues: Oligoribonuclease (181 aa).

One can recognise an Exonuclease domain in the interval 8 to 171 (LIWIDMEMTG…ADIYDSIEEL (164 aa)). The active site involves Y129.

The protein belongs to the oligoribonuclease family.

It localises to the cytoplasm. Its function is as follows. 3'-to-5' exoribonuclease specific for small oligoribonucleotides. The protein is Oligoribonuclease of Nitrosomonas eutropha (strain DSM 101675 / C91 / Nm57).